We begin with the raw amino-acid sequence, 818 residues long: Dipeptidyl-peptidase 7 (818 aa).

A signal peptide spans 1–22 (MKLKRILLSVALLCGIGTTAMA). Catalysis depends on charge relay system residues His-87, Asp-223, and Ser-645.

Belongs to the peptidase S46 family.

In terms of biological role, catalyzes the removal of dipeptides from the N-terminus of oligopeptides. Most efficiently cleaves the synthetic substrate Met-Leu-methylcoumaryl-7-amide (Met-Leu-MCA), and slowly hydrolyzes Leu-Gln-, Lys-Ala-, Leu-Arg, and Ala-Asn-MCA. Is likely involved in amino acid metabolism and bacterial growth/survival of asaccharolytic P.endodontalis, that utilizes amino acids from extracellular proteinaceous nutrients as energy and carbon sources. The sequence is that of Dipeptidyl-peptidase 7 from Porphyromonas endodontalis (strain ATCC 35406 / DSM 24491 / JCM 8526 / CCUG 16442 / BCRC 14492 / NCTC 13058 / HG 370) (Bacteroides endodontalis).